A 644-amino-acid chain; its full sequence is DNA mismatch repair protein MutL (644 aa).

This sequence belongs to the DNA mismatch repair MutL/HexB family.

In terms of biological role, this protein is involved in the repair of mismatches in DNA. It is required for dam-dependent methyl-directed DNA mismatch repair. May act as a 'molecular matchmaker', a protein that promotes the formation of a stable complex between two or more DNA-binding proteins in an ATP-dependent manner without itself being part of a final effector complex. The protein is DNA mismatch repair protein MutL of Chlorobium chlorochromatii (strain CaD3).